A 217-amino-acid polypeptide reads, in one-letter code: Leucyl/phenylalanyl-tRNA--protein transferase (217 aa).

Belongs to the L/F-transferase family.

The protein resides in the cytoplasm. It catalyses the reaction N-terminal L-lysyl-[protein] + L-leucyl-tRNA(Leu) = N-terminal L-leucyl-L-lysyl-[protein] + tRNA(Leu) + H(+). The catalysed reaction is N-terminal L-arginyl-[protein] + L-leucyl-tRNA(Leu) = N-terminal L-leucyl-L-arginyl-[protein] + tRNA(Leu) + H(+). It carries out the reaction L-phenylalanyl-tRNA(Phe) + an N-terminal L-alpha-aminoacyl-[protein] = an N-terminal L-phenylalanyl-L-alpha-aminoacyl-[protein] + tRNA(Phe). Functionally, functions in the N-end rule pathway of protein degradation where it conjugates Leu, Phe and, less efficiently, Met from aminoacyl-tRNAs to the N-termini of proteins containing an N-terminal arginine or lysine. The sequence is that of Leucyl/phenylalanyl-tRNA--protein transferase from Caulobacter vibrioides (strain ATCC 19089 / CIP 103742 / CB 15) (Caulobacter crescentus).